A 560-amino-acid chain; its full sequence is Proline--tRNA ligase (560 aa).

It belongs to the class-II aminoacyl-tRNA synthetase family. ProS type 1 subfamily. Homodimer.

The protein resides in the cytoplasm. The catalysed reaction is tRNA(Pro) + L-proline + ATP = L-prolyl-tRNA(Pro) + AMP + diphosphate. Catalyzes the attachment of proline to tRNA(Pro) in a two-step reaction: proline is first activated by ATP to form Pro-AMP and then transferred to the acceptor end of tRNA(Pro). As ProRS can inadvertently accommodate and process non-cognate amino acids such as alanine and cysteine, to avoid such errors it has two additional distinct editing activities against alanine. One activity is designated as 'pretransfer' editing and involves the tRNA(Pro)-independent hydrolysis of activated Ala-AMP. The other activity is designated 'posttransfer' editing and involves deacylation of mischarged Ala-tRNA(Pro). The misacylated Cys-tRNA(Pro) is not edited by ProRS. The protein is Proline--tRNA ligase of Vesicomyosocius okutanii subsp. Calyptogena okutanii (strain HA).